The primary structure comprises 173 residues: Protein FAM180A (173 aa).

Positions 1 to 17 are cleaved as a signal peptide; the sequence is MHWKMLLLLLLYYNAEA.

It belongs to the FAM180 family.

The protein localises to the secreted. The chain is Protein FAM180A (FAM180A) from Homo sapiens (Human).